A 418-amino-acid polypeptide reads, in one-letter code: Nucleoside permease NupG (418 aa).

The Cytoplasmic portion of the chain corresponds to 1-4; that stretch reads MNLK. The chain crosses the membrane as a helical span at residues 5–29; it reads LQLKILSFLQFCLWGSWLTTLGSYM. At 30 to 36 the chain is on the periplasmic side; it reads FVTLKFD. The chain crosses the membrane as a helical span at residues 37–58; it reads GASIGAVYSSLGIAAVFMPALL. At 59 to 67 the chain is on the cytoplasmic side; that stretch reads GIVADKWLS. The chain crosses the membrane as a helical span at residues 68–88; that stretch reads AKWVYAICHTIGAITLFMAAQ. At 89-91 the chain is on the periplasmic side; that stretch reads VTT. The chain crosses the membrane as a helical span at residues 92-113; it reads PEAMFLVILINSFAYMPTLGLI. Residues 114–135 are Cytoplasmic-facing; it reads NTISYYRLQNAGMDIVTDFPPI. The chain crosses the membrane as a helical span at residues 136–156; the sequence is RIWGTIGFIMAMWVVSLSGFE. Residues 157-158 lie on the Periplasmic side of the membrane; sequence LS. The chain crosses the membrane as a helical span at residues 159–178; it reads HMQLYIGAALSAILVLFTLT. Topologically, residues 179-209 are cytoplasmic; it reads LPHIPVAKQQANQSWTTLLGLDAFALFKNKR. A helical membrane pass occupies residues 210–236; that stretch reads MAIFFIFSMLLGAELQITNMFGNTFLH. Over 237–247 the chain is Periplasmic; it reads SFDKDPMFASS. A helical transmembrane segment spans residues 248-268; that stretch reads FIVQHASIIMSISQISETLFI. Residues 269 to 280 are Cytoplasmic-facing; that stretch reads LTIPFFLSRYGI. A helical membrane pass occupies residues 281–300; sequence KNVMMISIVAWILRFALFAY. At 301 to 305 the chain is on the periplasmic side; it reads GDPTP. The helical transmembrane segment at 306–326 threads the bilayer; it reads FGTVLLVLSMIVYGCAFDFFN. At 327-346 the chain is on the cytoplasmic side; that stretch reads ISGSVFVEKEVSPAIRASAQ. The helical transmembrane segment at 347–369 threads the bilayer; the sequence is GMFLMMTNGFGCILGGIVSGKVV. At 370–379 the chain is on the periplasmic side; that stretch reads EMYTQNGITD. The helical transmembrane segment at 380–403 threads the bilayer; sequence WQTVWLIFAGYSVVLAFAFMAMFK. Topologically, residues 404–418 are cytoplasmic; sequence YKHVRVPTGTQTVSH.

This sequence belongs to the major facilitator superfamily. Nucleoside:H(+) symporter (NHS) (TC 2.A.1.10) family.

It is found in the cell inner membrane. The catalysed reaction is adenosine(in) + H(+)(in) = adenosine(out) + H(+)(out). It catalyses the reaction uridine(in) + H(+)(in) = uridine(out) + H(+)(out). The enzyme catalyses thymidine(in) + H(+)(in) = thymidine(out) + H(+)(out). It carries out the reaction cytidine(in) + H(+)(in) = cytidine(out) + H(+)(out). The catalysed reaction is 2'-deoxycytidine(in) + H(+)(in) = 2'-deoxycytidine(out) + H(+)(out). It catalyses the reaction guanosine(in) + H(+)(in) = guanosine(out) + H(+)(out). The enzyme catalyses inosine(in) + H(+)(in) = inosine(out) + H(+)(out). Its activity is regulated as follows. Inhibited by the protonophore uncouplers 2,4-dinitrophenol and carbonyl cyanide m-chlorophenylhydrazone (CCCP), and by valinomycin. Inhibited by the nucleoside antibiotic showdomycin. Its function is as follows. Broad-specificity transporter of purine and pyrimidine nucleosides. Can transport adenosine, uridine, thymidine, cytidine, deoxycytidine, guanosine and inosine. Can also transport xanthosine, but with a very low affinity. Transport is driven by a proton motive force. The polypeptide is Nucleoside permease NupG (Escherichia coli (strain K12)).